The following is a 130-amino-acid chain: Small ribosomal subunit protein uS9 (130 aa).

It belongs to the universal ribosomal protein uS9 family.

The sequence is that of Small ribosomal subunit protein uS9 from Pseudomonas fluorescens (strain Pf0-1).